Consider the following 328-residue polypeptide: Cytosolic Fe-S cluster assembly factor NBP35 (328 aa).

Residues C27, C41, C44, and C50 each contribute to the [4Fe-4S] cluster site. 80–87 (GKGGVGKS) is an ATP binding site. [4Fe-4S] cluster is bound by residues C253 and C256.

Belongs to the Mrp/NBP35 ATP-binding proteins family. NUBP1/NBP35 subfamily. As to quaternary structure, heterotetramer of 2 NBP35 and 2 CFD1 chains. The cofactor is [4Fe-4S] cluster.

It is found in the cytoplasm. The protein resides in the nucleus. Component of the cytosolic iron-sulfur (Fe/S) protein assembly (CIA) machinery. Required for maturation of extramitochondrial Fe-S proteins. The NBP35-CFD1 heterotetramer forms a Fe-S scaffold complex, mediating the de novo assembly of an Fe-S cluster and its transfer to target apoproteins. Required for biogenesis and export of both ribosomal subunits, which may reflect a role in assembly of the Fe/S clusters in RLI1, a protein which performs rRNA processing and ribosome export. The chain is Cytosolic Fe-S cluster assembly factor NBP35 from Saccharomyces cerevisiae (strain ATCC 204508 / S288c) (Baker's yeast).